The chain runs to 107 residues: Transcriptional regulator Rv3488 (107 aa).

4 residues coordinate Cd(2+): His-16, Glu-30, His-34, and His-101.

In terms of assembly, homodimer.

In terms of biological role, may have transcription regulation and metal-detoxifying functions through which it may enhance intracellular survival of mycobacteria. Binds to its own promoter region and to the Rv1999c promoter region. It displays strong affinity for cadmium ions, but can also bind zinc, manganese and nickel. Expression increases the intracellular survival of recombinant M.smegmatis in murine macrophage cell line and increases its tolerance to cadmium ions. In Mycobacterium tuberculosis (strain ATCC 25618 / H37Rv), this protein is Transcriptional regulator Rv3488.